Here is a 366-residue protein sequence, read N- to C-terminus: Alanine racemase (366 aa).

Lys40 (proton acceptor; specific for D-alanine) is an active-site residue. Lys40 carries the N6-(pyridoxal phosphate)lysine modification. Arg136 provides a ligand contact to substrate. The Proton acceptor; specific for L-alanine role is filled by Tyr263. Met310 contacts substrate.

This sequence belongs to the alanine racemase family. Pyridoxal 5'-phosphate serves as cofactor.

It carries out the reaction L-alanine = D-alanine. It participates in amino-acid biosynthesis; D-alanine biosynthesis; D-alanine from L-alanine: step 1/1. Its function is as follows. Catalyzes the interconversion of L-alanine and D-alanine. May also act on other amino acids. The sequence is that of Alanine racemase (alr) from Streptococcus pyogenes serotype M5 (strain Manfredo).